The primary structure comprises 79 residues: NAD(P)H-quinone oxidoreductase subunit L (79 aa).

The next 2 helical transmembrane spans lie at 10–30 (IIIA…IPAV) and 48–68 (GFMY…SPFL).

Belongs to the complex I NdhL subunit family. NDH-1 can be composed of about 15 different subunits; different subcomplexes with different compositions have been identified which probably have different functions.

It localises to the cellular thylakoid membrane. It catalyses the reaction a plastoquinone + NADH + (n+1) H(+)(in) = a plastoquinol + NAD(+) + n H(+)(out). The enzyme catalyses a plastoquinone + NADPH + (n+1) H(+)(in) = a plastoquinol + NADP(+) + n H(+)(out). Functionally, NDH-1 shuttles electrons from an unknown electron donor, via FMN and iron-sulfur (Fe-S) centers, to quinones in the respiratory and/or the photosynthetic chain. The immediate electron acceptor for the enzyme in this species is believed to be plastoquinone. Couples the redox reaction to proton translocation, and thus conserves the redox energy in a proton gradient. Cyanobacterial NDH-1 also plays a role in inorganic carbon-concentration. In Microcystis aeruginosa (strain NIES-843 / IAM M-2473), this protein is NAD(P)H-quinone oxidoreductase subunit L.